The sequence spans 184 residues: Photosystem I assembly protein Ycf4 (184 aa).

Transmembrane regions (helical) follow at residues 22–42 (FGWACILFLGSLGFLVVGASS) and 57–77 (IVFFPQGIVMSFYGIAGLFIS).

This sequence belongs to the Ycf4 family.

It is found in the plastid. Its subcellular location is the chloroplast thylakoid membrane. In terms of biological role, seems to be required for the assembly of the photosystem I complex. The sequence is that of Photosystem I assembly protein Ycf4 from Acorus calamus (Sweet flag).